Here is a 152-residue protein sequence, read N- to C-terminus: UPF0178 protein swp_1285 (152 aa).

It belongs to the UPF0178 family.

The polypeptide is UPF0178 protein swp_1285 (Shewanella piezotolerans (strain WP3 / JCM 13877)).